Consider the following 165-residue polypeptide: Large ribosomal subunit protein uL10 (165 aa).

Belongs to the universal ribosomal protein uL10 family. Part of the ribosomal stalk of the 50S ribosomal subunit. The N-terminus interacts with L11 and the large rRNA to form the base of the stalk. The C-terminus forms an elongated spine to which L12 dimers bind in a sequential fashion forming a multimeric L10(L12)X complex.

Forms part of the ribosomal stalk, playing a central role in the interaction of the ribosome with GTP-bound translation factors. This is Large ribosomal subunit protein uL10 from Paraburkholderia phymatum (strain DSM 17167 / CIP 108236 / LMG 21445 / STM815) (Burkholderia phymatum).